Consider the following 999-residue polypeptide: Probable basic-leucine zipper transcription factor N (999 aa).

Low complexity-rich tracts occupy residues 1–79 and 88–126; these read MYQS…YQQQ and NNVN…INNN. The segment at 1–126 is disordered; it reads MYQSIPQQGN…NNNNGNINNN (126 aa). Coiled coils occupy residues 148–198 and 232–282; these read QQQQ…MVLM and GIQQ…QQIS. The span at 286–302 shows a compositional bias: polar residues; it reads ESASPYYSTPIQSNTML. Disordered regions lie at residues 286–406, 450–533, and 601–620; these read ESAS…SQDQ, QQLH…PTIN, and EKQK…NYRQ. Positions 303–347 are enriched in low complexity; sequence SIPSSPGIPSSIPQLNNSNNINNNSNNNNNNNNNNNNNNINYNSN. A compositionally biased stretch (polar residues) spans 348 to 406; that stretch reads MASNFISQHSNNGSNTSSPVPQTTYLQNSGGNFNAYNGSNTNSPITPSSYLQPTTSQDQ. Residues 423-451 adopt a coiled-coil conformation; the sequence is IQQQQKILQQQQQQQLLLQQQIQQQQQQQ. Residues 450–517 show a composition bias toward low complexity; that stretch reads QQLHQPQSPQ…IIQPTTIQPQ (68 aa). In terms of domain architecture, bZIP spans 601-664; the sequence is EKQKTRRRAS…KKLLHENNIL (64 aa). A basic motif region spans residues 602-632; it reads KQKTRRRASQNLASRNYRQRKKQYVNEVEDR. Positions 636–643 are leucine-zipper; that stretch reads IVQENERL. Disordered stretches follow at residues 665–711, 779–807, and 870–899; these read KSGG…VVET, QSCP…SPYE, and VNNG…TTTT. Over residues 682–692 the composition is skewed to acidic residues; it reads SEDEDEDDFDQ. A coiled-coil region spans residues 921–950; sequence HLVQLSGLLDKLKENIDHENETLIQTYEKL.

Belongs to the bZIP family.

The protein resides in the nucleus. Probable transcriptional regulator. This Dictyostelium discoideum (Social amoeba) protein is Probable basic-leucine zipper transcription factor N (bzpN).